Here is a 306-residue protein sequence, read N- to C-terminus: Porphobilinogen deaminase (306 aa).

Position 239 is an S-(dipyrrolylmethanemethyl)cysteine (cysteine 239).

This sequence belongs to the HMBS family. Monomer. Dipyrromethane is required as a cofactor.

The enzyme catalyses 4 porphobilinogen + H2O = hydroxymethylbilane + 4 NH4(+). It participates in porphyrin-containing compound metabolism; protoporphyrin-IX biosynthesis; coproporphyrinogen-III from 5-aminolevulinate: step 2/4. Functionally, tetrapolymerization of the monopyrrole PBG into the hydroxymethylbilane pre-uroporphyrinogen in several discrete steps. The protein is Porphobilinogen deaminase of Helicobacter pylori (strain G27).